The chain runs to 402 residues: Elongation factor Tu (402 aa).

Positions 16–211 constitute a tr-type G domain; the sequence is KEHINIGTIG…AVDSYIDSPV (196 aa). The G1 stretch occupies residues 25–32; it reads GHVDHGKT. 25–32 contacts GTP; it reads GHVDHGKT. Residue T32 coordinates Mg(2+). Positions 66–70 are G2; sequence GITIN. Residues 87-90 form a G3 region; sequence DCPG. GTP contacts are provided by residues 87–91 and 142–145; these read DCPGH and NKID. The interval 142-145 is G4; sequence NKID. The interval 181–183 is G5; the sequence is SAR.

It belongs to the TRAFAC class translation factor GTPase superfamily. Classic translation factor GTPase family. EF-Tu/EF-1A subfamily. Monomer.

The protein localises to the cytoplasm. It carries out the reaction GTP + H2O = GDP + phosphate + H(+). Functionally, GTP hydrolase that promotes the GTP-dependent binding of aminoacyl-tRNA to the A-site of ribosomes during protein biosynthesis. In Mesomycoplasma hyopneumoniae (strain 232) (Mycoplasma hyopneumoniae), this protein is Elongation factor Tu.